The following is a 448-amino-acid chain: MLIQRGGLKVVAGLGISGVSAVNFLHEQGYQVAVTDSRPTPPGHDQIPAGVKTSFGQLDQELLLQAEEIILSPGLAPQLPEIQAAIAKGISVVGDIQLLRRATDVPIVAITGSNAKSTVTTLIGLMAKDAGKKVAVGGNLGRPALDLLKDQPELLVLELSSFQLETTSHLNAEVAVVLNMSEDHLDRHGNMLGYHQAKHRIFQGAKKVVFNRDDALSRPLVPDTTPMQSFGLNAPDLNQYGVLRDADGTLWLACGLQRLIKSSDLYIQGMHNVANALACLALGEAIGLPMESMLETLKQFKGLEHRCEYVKTVHDVRYYNDSKGTNVGATLAAIDGLGAAIEVKKGKVALILGGQGKGQDFSPLRSSIEKYAKVVVLIGEDAPVIEQAIQGATKILHAATLKEAVELCQRETQAEDVVLLSPACASFDMFKSYNDRGQQFVACVNSLV.

112–118 (GSNAKST) contacts ATP.

This sequence belongs to the MurCDEF family.

The protein localises to the cytoplasm. It catalyses the reaction UDP-N-acetyl-alpha-D-muramoyl-L-alanine + D-glutamate + ATP = UDP-N-acetyl-alpha-D-muramoyl-L-alanyl-D-glutamate + ADP + phosphate + H(+). The protein operates within cell wall biogenesis; peptidoglycan biosynthesis. In terms of biological role, cell wall formation. Catalyzes the addition of glutamate to the nucleotide precursor UDP-N-acetylmuramoyl-L-alanine (UMA). The sequence is that of UDP-N-acetylmuramoylalanine--D-glutamate ligase from Acinetobacter baumannii (strain ATCC 17978 / DSM 105126 / CIP 53.77 / LMG 1025 / NCDC KC755 / 5377).